A 438-amino-acid chain; its full sequence is Phosphatidylcholine-sterol acyltransferase (438 aa).

Positions 1–24 (MGLPGSPWQRVLLLLGLLLPPATP) are cleaved as a signal peptide. An N-linked (GlcNAc...) asparagine glycan is attached at Asn-44. Cysteines 74 and 98 form a disulfide. N-linked (GlcNAc...) asparagine glycosylation occurs at Asn-108. The active-site Nucleophile is the Ser-205. Residue Asn-296 is glycosylated (N-linked (GlcNAc...) asparagine). Cys-337 and Cys-380 are joined by a disulfide. Asp-369 acts as the Charge relay system in catalysis. Asn-397 carries an N-linked (GlcNAc...) asparagine glycan. The active-site Charge relay system is His-401. N-linked (GlcNAc...) asparagine glycosylation occurs at Asn-408.

This sequence belongs to the AB hydrolase superfamily. Lipase family. As to expression, detected in blood plasma. Produced and secreted by astrocytes (at protein level). Abundantly expressed in liver, brain and testis with highest levels in liver. In the brain, found in cerebellum, cerebral cortex, hippocampus and brain stem. Located to neurons and neuroglia.

The protein localises to the secreted. The enzyme catalyses a sterol + a 1,2-diacyl-sn-glycero-3-phosphocholine = a sterol ester + a 1-acyl-sn-glycero-3-phosphocholine. It carries out the reaction a 1-O-alkyl-2-acetyl-sn-glycero-3-phosphocholine + H2O = a 1-O-alkyl-sn-glycero-3-phosphocholine + acetate + H(+). The catalysed reaction is a 1-hexadecanoyl-2-acyl-sn-glycero-3-phosphocholine + (24S)-hydroxycholesterol = (24S)-24-hydroxycholesterol ester + 1-hexadecanoyl-sn-glycero-3-phosphocholine. It catalyses the reaction (24S)-hydroxycholesterol + 1-hexadecanoyl-2-(9Z,12Z-octadecadienoyl)-sn-glycero-3-phosphocholine = (24S)-hydroxycholesterol 3-linoleoate + 1-hexadecanoyl-sn-glycero-3-phosphocholine. The enzyme catalyses 1-hexadecanoyl-2-(5Z,8Z,11Z,14Z-eicosatetraenoyl)-sn-glycero-3-phosphocholine + cholesterol = cholesteryl (5Z,8Z,11Z,14Z)-eicosatetraenoate + 1-hexadecanoyl-sn-glycero-3-phosphocholine. It carries out the reaction 1-hexadecanoyl-2-(9Z-octadecenoyl)-sn-glycero-3-phosphocholine + cholesterol = cholesteryl (9Z-octadecenoate) + 1-hexadecanoyl-sn-glycero-3-phosphocholine. The catalysed reaction is 1-hexadecanoyl-2-(8Z,11Z,14Z-eicosatrienoyl)-sn-glycero-3-phosphocholine + cholesterol = cholesteryl (8Z,11Z,14Z)-eicosatrienoate + 1-hexadecanoyl-sn-glycero-3-phosphocholine. It catalyses the reaction 1-hexadecanoyl-2-(5Z,8Z,11Z-eicosatrienoyl)-sn-glycero-3-phosphocholine + cholesterol = cholesteryl (5Z,8Z,11Z)-eicosatrienoate + 1-hexadecanoyl-sn-glycero-3-phosphocholine. The enzyme catalyses 1-hexadecanoyl-2-(5Z,8Z,11Z,14Z,17Z-eicosapentaenoyl)-sn-glycero-3-phosphocholine + cholesterol = (5Z,8Z,11Z,14Z,17Z-eicosapentaenoyl)-cholesterol + 1-hexadecanoyl-sn-glycero-3-phosphocholine. It carries out the reaction 1-hexadecanoyl-2-(9Z,12Z-octadecadienoyl)-sn-glycero-3-phosphocholine + cholesterol = cholesteryl (9Z,12Z)-octadecadienoate + 1-hexadecanoyl-sn-glycero-3-phosphocholine. The catalysed reaction is 1-hexadecanoyl-2-(6Z,9Z,12Z-octadecatrienoyl)-sn-glycero-3-phosphocholine + cholesterol = (6Z,9Z,12Z-octadecatrienoyl)-cholesterol + 1-hexadecanoyl-sn-glycero-3-phosphocholine. It catalyses the reaction 1-hexadecanoyl-2-(11Z,14Z,17Z-eicosatrienoyl)-sn-glycero-3-phosphocholine + cholesterol = (11Z,14Z,17Z-eicosatrienoyl)-cholesterol + 1-hexadecanoyl-sn-glycero-3-phosphocholine. The enzyme catalyses 1-hexadecanoyl-2-(9Z,12Z,15Z-octadecatrienoyl)-sn-glycero-3-phosphocholine + cholesterol = (9Z,12Z,15Z-octadecatrienoyl)-cholesterol + 1-hexadecanoyl-sn-glycero-3-phosphocholine. It carries out the reaction 1-hexadecanoyl-2-(9Z,12Z-octadecadienoyl)-sn-glycero-3-phosphocholine + H2O = (9Z,12Z)-octadecadienoate + 1-hexadecanoyl-sn-glycero-3-phosphocholine + H(+). The catalysed reaction is 1-hexadecanoyl-2-(5Z,8Z,11Z,14Z-eicosatetraenoyl)-sn-glycero-3-phosphocholine + H2O = 1-hexadecanoyl-sn-glycero-3-phosphocholine + (5Z,8Z,11Z,14Z)-eicosatetraenoate + H(+). It catalyses the reaction a 1-O-alkyl-2-acetyl-sn-glycero-3-phosphocholine + 1-hexadecanoyl-sn-glycero-3-phosphocholine = 1-hexadecanoyl-2-acetyl-sn-glycero-3-phosphocholine + a 1-O-alkyl-sn-glycero-3-phosphocholine. Its activity is regulated as follows. APOA1 is the most potent activator in plasma. Also activated by APOE, APOC1 and APOA4. Functionally, central enzyme in the extracellular metabolism of plasma lipoproteins. Synthesized mainly in the liver and secreted into plasma where it converts cholesterol and phosphatidylcholines (lecithins) to cholesteryl esters and lysophosphatidylcholines on the surface of high and low density lipoproteins (HDLs and LDLs). The cholesterol ester is then transported back to the liver. Also produced in the brain by primary astrocytes, and esterifies free cholesterol on nascent APOE-containing lipoproteins secreted from glia and influences cerebral spinal fluid (CSF) APOE- and APOA1 levels. Together with APOE and the cholesterol transporter ABCA1, plays a key role in the maturation of glial-derived, nascent lipoproteins. Required for remodeling high-density lipoprotein particles into their spherical forms. Has a preference for plasma 16:0-18:2 or 18:O-18:2 phosphatidylcholines. Catalyzes the hydrolysis of 1-O-alkyl-2-acetyl-sn-glycero-3-phosphocholine (platelet-activating factor or PAF) to 1-O-alkyl-sn-glycero-3-phosphocholine (lyso-PAF). Also catalyzes the transfer of the acetate group from PAF to 1-hexadecanoyl-sn-glycero-3-phosphocholine forming lyso-PAF. Catalyzes the esterification of (24S)-hydroxycholesterol (24(S)OH-C), also known as cerebrosterol to produce 24(S)OH-C monoesters. This chain is Phosphatidylcholine-sterol acyltransferase (Lcat), found in Mus musculus (Mouse).